Consider the following 29-residue polypeptide: Cytochrome b6-f complex subunit 8 (29 aa).

A helical transmembrane segment spans residues 3–23 (ITSIAWGALMVVFTFSLSLVV).

It belongs to the PetN family. As to quaternary structure, the 4 large subunits of the cytochrome b6-f complex are cytochrome b6, subunit IV (17 kDa polypeptide, PetD), cytochrome f and the Rieske protein, while the 4 small subunits are PetG, PetL, PetM and PetN. The complex functions as a dimer.

Its subcellular location is the plastid membrane. Its function is as follows. Component of the cytochrome b6-f complex, which mediates electron transfer between photosystem II (PSII) and photosystem I (PSI), cyclic electron flow around PSI, and state transitions. This Aneura mirabilis (Parasitic liverwort) protein is Cytochrome b6-f complex subunit 8.